A 158-amino-acid polypeptide reads, in one-letter code: Pleckstrin homology domain-containing family J member 1 (158 aa).

Residues 15–108 (PTQRAAELGM…WIDAIIKASY (94 aa)) form the PH domain.

The chain is Pleckstrin homology domain-containing family J member 1 (plekhj1) from Danio rerio (Zebrafish).